We begin with the raw amino-acid sequence, 348 residues long: Photosystem II protein D1 (348 aa).

The next 3 membrane-spanning stretches (helical) occupy residues 33 to 50, 122 to 137, and 146 to 160; these read YIGW…LATV, HFIL…EWEF, and WIFV…AASA. Histidine 122 provides a ligand contact to chlorophyll a. Tyrosine 130 contributes to the pheophytin a binding site. 2 residues coordinate [CaMn4O5] cluster: aspartate 174 and glutamate 193. A helical transmembrane segment spans residues 201–222; sequence FHILGVAAVFGGSLFSAMHGSL. Position 202 (histidine 202) interacts with chlorophyll a. Residues histidine 219 and 268-269 each bind a quinone; that span reads SF. Residue histidine 219 coordinates Fe cation. Histidine 276 is a Fe cation binding site. The chain crosses the membrane as a helical span at residues 278 to 292; it reads FLAAWPVIGIWFTAL. Residues histidine 336, glutamate 337, aspartate 346, and alanine 348 each contribute to the [CaMn4O5] cluster site.

This sequence belongs to the reaction center PufL/M/PsbA/D family. PSII is composed of 1 copy each of membrane proteins PsbA, PsbB, PsbC, PsbD, PsbE, PsbF, PsbH, PsbI, PsbJ, PsbK, PsbL, PsbM, PsbT, PsbX, PsbY, PsbZ, Psb30/Ycf12, at least 3 peripheral proteins of the oxygen-evolving complex and a large number of cofactors. It forms dimeric complexes. The cofactor is The D1/D2 heterodimer binds P680, chlorophylls that are the primary electron donor of PSII, and subsequent electron acceptors. It shares a non-heme iron and each subunit binds pheophytin, quinone, additional chlorophylls, carotenoids and lipids. D1 provides most of the ligands for the Mn4-Ca-O5 cluster of the oxygen-evolving complex (OEC). There is also a Cl(-1) ion associated with D1 and D2, which is required for oxygen evolution. The PSII complex binds additional chlorophylls, carotenoids and specific lipids.. In terms of processing, tyr-165 forms a radical intermediate that is referred to as redox-active TyrZ, YZ or Y-Z.

It localises to the plastid. Its subcellular location is the chloroplast thylakoid membrane. It catalyses the reaction 2 a plastoquinone + 4 hnu + 2 H2O = 2 a plastoquinol + O2. Photosystem II (PSII) is a light-driven water:plastoquinone oxidoreductase that uses light energy to abstract electrons from H(2)O, generating O(2) and a proton gradient subsequently used for ATP formation. It consists of a core antenna complex that captures photons, and an electron transfer chain that converts photonic excitation into a charge separation. The D1/D2 (PsbA/PsbD) reaction center heterodimer binds P680, the primary electron donor of PSII as well as several subsequent electron acceptors. The sequence is that of Photosystem II protein D1 from Heterocapsa pygmaea (Dinoflagellate).